We begin with the raw amino-acid sequence, 193 residues long: dTTP/UTP pyrophosphatase (193 aa).

Aspartate 77 serves as the catalytic Proton acceptor.

Belongs to the Maf family. YhdE subfamily. The cofactor is a divalent metal cation.

It localises to the cytoplasm. It catalyses the reaction dTTP + H2O = dTMP + diphosphate + H(+). It carries out the reaction UTP + H2O = UMP + diphosphate + H(+). Functionally, nucleoside triphosphate pyrophosphatase that hydrolyzes dTTP and UTP. May have a dual role in cell division arrest and in preventing the incorporation of modified nucleotides into cellular nucleic acids. In Bacteroides fragilis (strain YCH46), this protein is dTTP/UTP pyrophosphatase.